We begin with the raw amino-acid sequence, 351 residues long: Penicillolysin (351 aa).

A signal peptide spans 1 to 19 (MRFTTLSTAFLALAQNVYA). Positions 20–174 (FPIESDLSAL…TKALKPLDRR (155 aa)) are excised as a propeptide. 2 N-linked (GlcNAc...) asparagine glycosylation sites follow: asparagine 52 and asparagine 181. Position 302 (histidine 302) interacts with Zn(2+). Glutamate 303 is a catalytic residue. Zn(2+) is bound by residues histidine 306 and aspartate 317.

It belongs to the peptidase M35 family. The cofactor is Zn(2+).

The enzyme catalyses Preferential cleavage of bonds with hydrophobic residues in P1'. Also 3-Asn-|-Gln-4 and 8-Gly-|-Ser-9 bonds in insulin B chain.. This Penicillium citrinum protein is Penicillolysin (plnC).